The sequence spans 504 residues: Maturase K (504 aa).

The protein belongs to the intron maturase 2 family. MatK subfamily.

The protein resides in the plastid. The protein localises to the chloroplast. Its function is as follows. Usually encoded in the trnK tRNA gene intron. Probably assists in splicing its own and other chloroplast group II introns. This chain is Maturase K, found in Cardamine amara (Large bitter-cress).